A 213-amino-acid polypeptide reads, in one-letter code: 3-isopropylmalate dehydratase small subunit (213 aa).

The protein belongs to the LeuD family. LeuD type 1 subfamily. In terms of assembly, heterodimer of LeuC and LeuD.

The enzyme catalyses (2R,3S)-3-isopropylmalate = (2S)-2-isopropylmalate. Its pathway is amino-acid biosynthesis; L-leucine biosynthesis; L-leucine from 3-methyl-2-oxobutanoate: step 2/4. Functionally, catalyzes the isomerization between 2-isopropylmalate and 3-isopropylmalate, via the formation of 2-isopropylmaleate. The polypeptide is 3-isopropylmalate dehydratase small subunit (Pseudomonas syringae pv. tomato (strain ATCC BAA-871 / DC3000)).